Here is a 157-residue protein sequence, read N- to C-terminus: Small ribosomal subunit protein uS7 (157 aa).

It belongs to the universal ribosomal protein uS7 family. Part of the 30S ribosomal subunit. Contacts proteins S9 and S11.

Functionally, one of the primary rRNA binding proteins, it binds directly to 16S rRNA where it nucleates assembly of the head domain of the 30S subunit. Is located at the subunit interface close to the decoding center, probably blocks exit of the E-site tRNA. The chain is Small ribosomal subunit protein uS7 from Stenotrophomonas maltophilia (strain R551-3).